Consider the following 300-residue polypeptide: GTPase Era (300 aa).

The region spanning 5–176 (HSGFVCLVGR…IDVLAAALPA (172 aa)) is the Era-type G domain. The interval 13 to 20 (GRPNTGKS) is G1. A GTP-binding site is contributed by 13-20 (GRPNTGKS). The segment at 39–43 (QTTRH) is G2. Residues 60-63 (DTPG) are G3. Residues 60-64 (DTPGL) and 125-128 (TKID) contribute to the GTP site. The segment at 125–128 (TKID) is G4. The tract at residues 155–157 (VSA) is G5. Residues 207-286 (VRDELPHSLA…YLDLRVKVAK (80 aa)) enclose the KH type-2 domain.

This sequence belongs to the TRAFAC class TrmE-Era-EngA-EngB-Septin-like GTPase superfamily. Era GTPase family. Monomer.

Its subcellular location is the cell envelope. It localises to the secreted. The protein localises to the cell wall. Its function is as follows. Exhibits GTPase activity. Binds RNA but is probably not involved in ribosome assembly in mycobacteria. The polypeptide is GTPase Era (Mycobacterium bovis (strain ATCC BAA-935 / AF2122/97)).